Consider the following 430-residue polypeptide: Isochorismate synthase MenF (430 aa).

Lysine 187 acts as the Proton acceptor in catalysis. Catalysis depends on glutamate 237, which acts as the Proton donor. Glutamate 281 and glutamate 414 together coordinate Mg(2+).

The protein belongs to the isochorismate synthase family. Mg(2+) serves as cofactor.

It catalyses the reaction chorismate = isochorismate. Its pathway is quinol/quinone metabolism; 1,4-dihydroxy-2-naphthoate biosynthesis; 1,4-dihydroxy-2-naphthoate from chorismate: step 1/7. It participates in quinol/quinone metabolism; menaquinone biosynthesis. In terms of biological role, catalyzes the conversion of chorismate to isochorismate. This chain is Isochorismate synthase MenF, found in Haemophilus influenzae (strain ATCC 51907 / DSM 11121 / KW20 / Rd).